Here is a 526-residue protein sequence, read N- to C-terminus: Probable inorganic phosphate transporter 1-3 (526 aa).

Over 1–21 the chain is Cytoplasmic; it reads MADGQLKVLTTLDHARTQWYH. The helical transmembrane segment at 22-42 threads the bilayer; the sequence is FMAIVIAGMGFFTDAYDLFCI. At 43 to 70 the chain is on the extracellular side; sequence SLVSKLLGRIYYTDLAGDNPGSLPPNVS. The chain crosses the membrane as a helical span at residues 71–91; the sequence is AAVNGVALCGTLAGQLFFGWL. Residues 92 to 99 lie on the Cytoplasmic side of the membrane; the sequence is GDKLGRKS. The chain crosses the membrane as a helical span at residues 100 to 120; that stretch reads VYGFTLVLMVVCSVASGLSFG. Residues 121–124 lie on the Extracellular side of the membrane; sequence RTAK. A helical transmembrane segment spans residues 125 to 145; the sequence is GVVATLCFFRFWLGFGIGGDY. Topologically, residues 146-163 are cytoplasmic; that stretch reads PLSATIMSEYANKRTRGA. A helical membrane pass occupies residues 164-184; it reads FIAAVFAMQGFGILFGAIVAL. The Extracellular segment spans residues 185 to 211; that stretch reads VVSAGFRNAYPAPSYADGRAASLVPEA. Residues 212 to 232 traverse the membrane as a helical segment; the sequence is DYVWRIILMFGTVPAALTYYW. The Cytoplasmic portion of the chain corresponds to 233 to 294; the sequence is RMKMPETARY…GLFSRQFVRR (62 aa). The chain crosses the membrane as a helical span at residues 295–315; it reads HGVHLVATTSTWFLLDIAFYS. Over 316–349 the chain is Extracellular; it reads QNLFQKDIFSKVGWIPPARTMNAVEEVFRIARAQ. A helical transmembrane segment spans residues 350–370; the sequence is ALIALCGTIPGYWFTVAFIDV. The Cytoplasmic portion of the chain corresponds to 371-373; that stretch reads AGR. A helical transmembrane segment spans residues 374–394; the sequence is FAIQLMGFAMMTVFMLGLAAP. Over 395–407 the chain is Extracellular; that stretch reads YHHWTTPGNHTGF. A helical transmembrane segment spans residues 408–428; sequence VVMYGFTFFFANFGPNATTFI. Over 429–444 the chain is Cytoplasmic; that stretch reads VPAEIYPARLRSTCHG. A helical transmembrane segment spans residues 445-465; that stretch reads ISAAAGKAGAIVGAFGFLYAA. Residues 466 to 483 are Extracellular-facing; the sequence is QDPHKPEAGYKPGIGIRN. A helical membrane pass occupies residues 484 to 504; sequence ALFVLAGTNFLGMLMTLLVPE. Over 505–526 the chain is Cytoplasmic; sequence SKGMSLEEVSKENVADDEEATA.

This sequence belongs to the major facilitator superfamily. Phosphate:H(+) symporter (TC 2.A.1.9) family. In terms of tissue distribution, expressed at low levels in roots.

It is found in the membrane. Its function is as follows. High-affinity transporter for external inorganic phosphate. The chain is Probable inorganic phosphate transporter 1-3 (PHT1-3) from Oryza sativa subsp. japonica (Rice).